The sequence spans 213 residues: Octanoyltransferase (213 aa).

The BPL/LPL catalytic domain maps to 27–209 (AATPDEVWLC…RLLAAMPEPA (183 aa)). Substrate-binding positions include 66–73 (RGGQVTYH), 140–142 (ALG), and 153–155 (GVA). Cys171 serves as the catalytic Acyl-thioester intermediate.

It belongs to the LipB family.

The protein localises to the cytoplasm. It catalyses the reaction octanoyl-[ACP] + L-lysyl-[protein] = N(6)-octanoyl-L-lysyl-[protein] + holo-[ACP] + H(+). It participates in protein modification; protein lipoylation via endogenous pathway; protein N(6)-(lipoyl)lysine from octanoyl-[acyl-carrier-protein]: step 1/2. In terms of biological role, catalyzes the transfer of endogenously produced octanoic acid from octanoyl-acyl-carrier-protein onto the lipoyl domains of lipoate-dependent enzymes. Lipoyl-ACP can also act as a substrate although octanoyl-ACP is likely to be the physiological substrate. The protein is Octanoyltransferase of Bordetella petrii (strain ATCC BAA-461 / DSM 12804 / CCUG 43448).